The chain runs to 427 residues: Chaperone SurA (427 aa).

The N-terminal stretch at 1–13 (MLGVALLSGAVHA) is a signal peptide. PpiC domains are found at residues 164–265 (SEEY…KLEE) and 275–374 (RDEV…EVLG).

The protein localises to the periplasm. It catalyses the reaction [protein]-peptidylproline (omega=180) = [protein]-peptidylproline (omega=0). Functionally, chaperone involved in the correct folding and assembly of outer membrane proteins. Recognizes specific patterns of aromatic residues and the orientation of their side chains, which are found more frequently in integral outer membrane proteins. May act in both early periplasmic and late outer membrane-associated steps of protein maturation. This is Chaperone SurA from Pseudomonas putida (strain ATCC 47054 / DSM 6125 / CFBP 8728 / NCIMB 11950 / KT2440).